Here is a 447-residue protein sequence, read N- to C-terminus: Probable glycine dehydrogenase (decarboxylating) subunit 1 (447 aa).

This sequence belongs to the GcvP family. N-terminal subunit subfamily. In terms of assembly, the glycine cleavage system is composed of four proteins: P, T, L and H. In this organism, the P 'protein' is a heterodimer of two subunits.

The catalysed reaction is N(6)-[(R)-lipoyl]-L-lysyl-[glycine-cleavage complex H protein] + glycine + H(+) = N(6)-[(R)-S(8)-aminomethyldihydrolipoyl]-L-lysyl-[glycine-cleavage complex H protein] + CO2. The glycine cleavage system catalyzes the degradation of glycine. The P protein binds the alpha-amino group of glycine through its pyridoxal phosphate cofactor; CO(2) is released and the remaining methylamine moiety is then transferred to the lipoamide cofactor of the H protein. In Macrococcus caseolyticus (strain JCSC5402) (Macrococcoides caseolyticum), this protein is Probable glycine dehydrogenase (decarboxylating) subunit 1.